Here is a 625-residue protein sequence, read N- to C-terminus: Chaperone protein HtpG (625 aa).

Residues 1–341 (MGKRKFKAES…SEDLSLNISR (341 aa)) are a; substrate-binding. The tract at residues 342-551 (EMLQHDRQLK…DGEISLEMEK (210 aa)) is b. A c region spans residues 552–625 (IINAMPDDQQ…FTNDICKVMV (74 aa)).

It belongs to the heat shock protein 90 family. Homodimer.

Its subcellular location is the cytoplasm. Its function is as follows. Molecular chaperone. Has ATPase activity. The sequence is that of Chaperone protein HtpG from Oceanobacillus iheyensis (strain DSM 14371 / CIP 107618 / JCM 11309 / KCTC 3954 / HTE831).